Reading from the N-terminus, the 854-residue chain is Aryl hydrocarbon receptor (854 aa).

The propeptide occupies 1–9 (MSSGANITY). The segment at 1-38 (MSSGANITYASRKRRKPVQKTVKPIPAEGIKSNPSKRH) is disordered. 2 short sequence motifs (nuclear localization signal) span residues 12 to 15 (RKRR) and 36 to 41 (KRHRDR). In terms of domain architecture, bHLH spans 26–79 (PAEGIKSNPSKRHRDRLNTELDRLASLLPFPQDVINKLDKLSVLRLSVSYLRAK). The interval 37–65 (RHRDRLNTELDRLASLLPFPQDVINKLDK) is DNA-binding. Required for maintaining the overall integrity of the AHR:ARNT heterodimer and its transcriptional activity regions lie at residues 49-81 (LASL…AKSF), 116-124 (LLQALNGFV), and 264-266 (FAI). A Nuclear export signal motif is present at residues 63–71 (LDKLSVLRL). Positions 111 to 175 (QEGEFLLQAL…AEFQRQLHWA (65 aa)) constitute a PAS 1 domain. The 71-residue stretch at 270-340 (LQPPSILEIR…CAESHIRMIK (71 aa)) folds into the PAS 2 domain. The PAC domain maps to 346–387 (MTVFRLLAKHSRWRWVQSNARLIYRNGRPDYIIATQRPLTDE). The segment at 425-452 (LPIRTKSNTSRKDWAPQSTPSKDSFHPS) is disordered. Positions 440–452 (PQSTPSKDSFHPS) are enriched in polar residues.

In terms of assembly, homodimer. Heterodimer; efficient DNA binding requires dimerization with another bHLH protein. Interacts with ARNT; the heterodimer ARNT:AHR binds to core DNA sequence 5'-TGCGTG-3' within the dioxin response element (DRE) of target gene promoters and activates their transcription. Binds MYBBP1A. Interacts with coactivators including SRC-1, RIP140 and NOCA7, and with the corepressor SMRT. Interacts with NEDD8 and IVNS1ABP. Interacts with BMAL1. Interacts with HSP90AB1. Interacts with TIPARP; leading to mono-ADP-ribosylation of AHR and subsequent inhibition of AHR. Post-translationally, mono-ADP-ribosylated, leading to inhibit transcription activator activity of AHR.

The protein localises to the cytoplasm. Its subcellular location is the nucleus. In terms of biological role, ligand-activated transcription factor that enables cells to adapt to changing conditions by sensing compounds from the environment, diet, microbiome and cellular metabolism, and which plays important roles in development, immunity and cancer. Upon ligand binding, translocates into the nucleus, where it heterodimerizes with ARNT and induces transcription by binding to xenobiotic response elements (XRE). Regulates a variety of biological processes, including angiogenesis, hematopoiesis, drug and lipid metabolism, cell motility and immune modulation. Xenobiotics can act as ligands: upon xenobiotic-binding, activates the expression of multiple phase I and II xenobiotic chemical metabolizing enzyme genes (such as the CYP1A1 gene). Mediates biochemical and toxic effects of halogenated aromatic hydrocarbons. Next to xenobiotics, natural ligands derived from plants, microbiota, and endogenous metabolism are potent AHR agonists. Tryptophan (Trp) derivatives constitute an important class of endogenous AHR ligands. Acts as a negative regulator of anti-tumor immunity: indoles and kynurenic acid generated by Trp catabolism act as ligand and activate AHR, thereby promoting AHR-driven cancer cell motility and suppressing adaptive immunity. Regulates the circadian clock by inhibiting the basal and circadian expression of the core circadian component PER1. Inhibits PER1 by repressing the CLOCK-BMAL1 heterodimer mediated transcriptional activation of PER1. The heterodimer ARNT:AHR binds to core DNA sequence 5'-TGCGTG-3' within the dioxin response element (DRE) of target gene promoters and activates their transcription. The protein is Aryl hydrocarbon receptor (Ahr) of Mus spretus (Western Mediterranean mouse).